Consider the following 341-residue polypeptide: HTH-type transcriptional repressor PurR (341 aa).

One can recognise an HTH lacI-type domain in the interval 2-56 (ATIKDVAKRAGVSTTTVSHVINKTRFVADETREAVWVAIKELHYSPSAVARSLKV). The segment at residues 4–23 (IKDVAKRAGVSTTTVSHVIN) is a DNA-binding region (H-T-H motif). Residues 48–56 (SAVARSLKV) mediate DNA binding. Positions 73, 190, 192, 221, and 275 each coordinate hypoxanthine.

In terms of assembly, homodimer.

It participates in purine metabolism; purine nucleotide biosynthesis [regulation]. Is the main repressor of the genes involved in the de novo synthesis of purine nucleotides, regulating purB, purC, purEK, purF, purHD, purL, purMN and guaBA expression. PurR is allosterically activated to bind its cognate DNA by binding the purine corepressors, hypoxanthine or guanine, thereby effecting transcription repression. This is HTH-type transcriptional repressor PurR from Erwinia tasmaniensis (strain DSM 17950 / CFBP 7177 / CIP 109463 / NCPPB 4357 / Et1/99).